The following is a 110-amino-acid chain: UPF0060 membrane protein Swit_0423 (110 aa).

The next 4 helical transmembrane spans lie at 6–26 (LFIFVAAALCEIGGCFAFWAW), 29–49 (LGKSPLWAVGGVGLLILFAWL), 61–81 (AFAAYGGIYICASLGWMWAVE), and 90–110 (LIGVLLCAVGSAVILLGPRTA).

It belongs to the UPF0060 family.

It is found in the cell inner membrane. This chain is UPF0060 membrane protein Swit_0423, found in Rhizorhabdus wittichii (strain DSM 6014 / CCUG 31198 / JCM 15750 / NBRC 105917 / EY 4224 / RW1) (Sphingomonas wittichii).